Reading from the N-terminus, the 283-residue chain is MKQYLDLCQRIVDQGVWVENERTGKRCLTVINADLTYDVANNQFPLVTTRKSFWKAAVAELLGYIRGYDNAEDFRKLGTKTWDANANLNDAWLNNPYRKGEDDMGRVYGVQGRAWAKPDGGHIDQLRKIVDDLTRGVDDRGEILNFYNPGEFHMGCLRPCMYSHHFSLLDDTLYLNSTQRSCDVPLGLNFNMVQVYVFLAIMAQITGKKPGQAFHKIVNAHIYEDQLELMRDVQLKREPLQAPTFHINPEIKSLEDLETWVTLDDFWVEGYEHHDPIRYPFSV.

Arginine 22 provides a ligand contact to dUMP. Cysteine 160 acts as the Nucleophile in catalysis. DUMP contacts are provided by residues 180-183 (RSCD), asparagine 191, and 221-223 (HIY). Residue aspartate 183 coordinates (6R)-5,10-methylene-5,6,7,8-tetrahydrofolate. Serine 282 is a (6R)-5,10-methylene-5,6,7,8-tetrahydrofolate binding site.

Belongs to the thymidylate synthase family. Bacterial-type ThyA subfamily. Homodimer.

It is found in the cytoplasm. The enzyme catalyses dUMP + (6R)-5,10-methylene-5,6,7,8-tetrahydrofolate = 7,8-dihydrofolate + dTMP. It participates in pyrimidine metabolism; dTTP biosynthesis. Catalyzes the reductive methylation of 2'-deoxyuridine-5'-monophosphate (dUMP) to 2'-deoxythymidine-5'-monophosphate (dTMP) while utilizing 5,10-methylenetetrahydrofolate (mTHF) as the methyl donor and reductant in the reaction, yielding dihydrofolate (DHF) as a by-product. This enzymatic reaction provides an intracellular de novo source of dTMP, an essential precursor for DNA biosynthesis. This Vibrio parahaemolyticus serotype O3:K6 (strain RIMD 2210633) protein is Thymidylate synthase.